The sequence spans 98 residues: NADH-ubiquinone oxidoreductase chain 4L (98 aa).

The next 3 membrane-spanning stretches (helical) occupy residues 1–21 (MSMVYANIFLAFIMSLMGLLV), 30–50 (LLCLEGMMLSLFVMMTVTILI), and 61–81 (IILLVFAACEAALGLSLLVMV).

The protein belongs to the complex I subunit 4L family. As to quaternary structure, core subunit of respiratory chain NADH dehydrogenase (Complex I) which is composed of 45 different subunits.

The protein resides in the mitochondrion inner membrane. It catalyses the reaction a ubiquinone + NADH + 5 H(+)(in) = a ubiquinol + NAD(+) + 4 H(+)(out). Functionally, core subunit of the mitochondrial membrane respiratory chain NADH dehydrogenase (Complex I) which catalyzes electron transfer from NADH through the respiratory chain, using ubiquinone as an electron acceptor. Part of the enzyme membrane arm which is embedded in the lipid bilayer and involved in proton translocation. The chain is NADH-ubiquinone oxidoreductase chain 4L (MT-ND4L) from Pagophilus groenlandicus (Harp seal).